A 567-amino-acid chain; its full sequence is Cytochrome P450 monooxygenase 79 (567 aa).

Residues 7-24 (ELAILAIVLLVTAVVFYT) form a helical membrane-spanning segment. Residues asparagine 223 and asparagine 279 are each glycosylated (N-linked (GlcNAc...) asparagine). Cysteine 475 provides a ligand contact to heme.

It belongs to the cytochrome P450 family. It depends on heme as a cofactor.

The protein resides in the membrane. Its pathway is secondary metabolite biosynthesis. Cytochrome P450 monooxygenase that is able to use dehydroabietic acid as a substrate for oxidation. This Postia placenta (strain ATCC 44394 / Madison 698-R) (Brown rot fungus) protein is Cytochrome P450 monooxygenase 79.